The sequence spans 230 residues: Large ribosomal subunit protein uL1 (230 aa).

It belongs to the universal ribosomal protein uL1 family. In terms of assembly, part of the 50S ribosomal subunit.

Binds directly to 23S rRNA. The L1 stalk is quite mobile in the ribosome, and is involved in E site tRNA release. Functionally, protein L1 is also a translational repressor protein, it controls the translation of the L11 operon by binding to its mRNA. The protein is Large ribosomal subunit protein uL1 of Oenococcus oeni (strain ATCC BAA-331 / PSU-1).